An 896-amino-acid chain; its full sequence is Bifunctional glutamine synthetase adenylyltransferase/adenylyl-removing enzyme (896 aa).

An adenylyl removase region spans residues 1–411 (MSDNRLDTAR…LFNEILSEPE (411 aa)). Positions 417-896 (NSEWQWAWQD…EVFGEEAATV (480 aa)) are adenylyl transferase.

This sequence belongs to the GlnE family. Requires Mg(2+) as cofactor.

The catalysed reaction is [glutamine synthetase]-O(4)-(5'-adenylyl)-L-tyrosine + phosphate = [glutamine synthetase]-L-tyrosine + ADP. It carries out the reaction [glutamine synthetase]-L-tyrosine + ATP = [glutamine synthetase]-O(4)-(5'-adenylyl)-L-tyrosine + diphosphate. Its function is as follows. Involved in the regulation of glutamine synthetase GlnA, a key enzyme in the process to assimilate ammonia. When cellular nitrogen levels are high, the C-terminal adenylyl transferase (AT) inactivates GlnA by covalent transfer of an adenylyl group from ATP to specific tyrosine residue of GlnA, thus reducing its activity. Conversely, when nitrogen levels are low, the N-terminal adenylyl removase (AR) activates GlnA by removing the adenylyl group by phosphorolysis, increasing its activity. The regulatory region of GlnE binds the signal transduction protein PII (GlnB) which indicates the nitrogen status of the cell. This Neisseria meningitidis serogroup B (strain ATCC BAA-335 / MC58) protein is Bifunctional glutamine synthetase adenylyltransferase/adenylyl-removing enzyme.